Consider the following 338-residue polypeptide: Fructose-1,6-bisphosphatase class 1 (338 aa).

Residues E90, D112, L114, and D115 each coordinate Mg(2+). Substrate-binding positions include 115-118 (DGSS), N207, and K273. Mg(2+) is bound at residue E279.

It belongs to the FBPase class 1 family. In terms of assembly, homotetramer. Mg(2+) serves as cofactor.

The protein localises to the cytoplasm. It carries out the reaction beta-D-fructose 1,6-bisphosphate + H2O = beta-D-fructose 6-phosphate + phosphate. The protein operates within carbohydrate biosynthesis; gluconeogenesis. This chain is Fructose-1,6-bisphosphatase class 1, found in Xanthomonas campestris pv. campestris (strain 8004).